Here is a 251-residue protein sequence, read N- to C-terminus: DNA repair protein RecO (251 aa).

Belongs to the RecO family.

Its function is as follows. Involved in DNA repair and RecF pathway recombination. This is DNA repair protein RecO from Staphylococcus saprophyticus subsp. saprophyticus (strain ATCC 15305 / DSM 20229 / NCIMB 8711 / NCTC 7292 / S-41).